We begin with the raw amino-acid sequence, 329 residues long: Chlorophyllase-1, chloroplastic (329 aa).

A chloroplast-targeting transit peptide spans 1 to 21 (MAAMVDSKPAASVQGTPLLAT). The short motif at 145-149 (GHSRG) is the GXSXG element. The Nucleophile role is filled by serine 147. Catalysis depends on charge relay system residues aspartate 169 and histidine 242.

The protein belongs to the AB hydrolase superfamily. Lipase family.

It is found in the plastid. The protein resides in the chloroplast. The enzyme catalyses a chlorophyll + H2O = a chlorophyllide + phytol + H(+). Its pathway is porphyrin-containing compound metabolism; chlorophyll degradation. Its function is as follows. Catalyzes the hydrolysis of ester bond in chlorophyll to yield chlorophyllide and phytol. The polypeptide is Chlorophyllase-1, chloroplastic (Citrus unshiu (Satsuma mandarin)).